The following is a 734-amino-acid chain: Sulfate transporter (734 aa).

A compositionally biased stretch (basic and acidic residues) spans M1 to K18. Positions M1–R38 are disordered. Residues S12 and S16 each carry the phosphoserine modification. 2 helical membrane-spanning segments follow: residues V113 to L133 and P138 to S158. An N-linked (GlcNAc...) asparagine glycan is attached at N194. 6 consecutive transmembrane segments (helical) span residues I214 to F234, G237 to F257, V379 to F399, A415 to L435, V453 to L473, and L519 to L539. The 152-residue stretch at A563–A714 folds into the STAS domain.

The protein belongs to the SLC26A/SulP transporter (TC 2.A.53) family. Post-translationally, N-glycosylated.

Its subcellular location is the cell membrane. It localises to the apical cell membrane. The catalysed reaction is oxalate(in) + sulfate(out) = oxalate(out) + sulfate(in). It catalyses the reaction sulfate(out) + 2 chloride(in) = sulfate(in) + 2 chloride(out). It carries out the reaction oxalate(out) + 2 chloride(in) = oxalate(in) + 2 chloride(out). The enzyme catalyses bromide(in) + chloride(out) = bromide(out) + chloride(in). The catalysed reaction is nitrate(in) + chloride(out) = nitrate(out) + chloride(in). It catalyses the reaction iodide(in) + chloride(out) = iodide(out) + chloride(in). In terms of biological role, sulfate transporter which mediates sulfate uptake into chondrocytes in order to maintain adequate sulfation of proteoglycans which is needed for cartilage development. Mediates electroneutral anion exchange of sulfate ions for oxalate ions, sulfate and oxalate ions for chloride and/or hydroxyl ions and chloride ions for bromide, iodide and nitrate ions. The coupling of sulfate transport to both hydroxyl and chloride ions likely serves to ensure transport at both acidic pH when most sulfate uptake is mediated by sulfate-hydroxide exchange and alkaline pH when most sulfate uptake is mediated by sulfate-chloride exchange. Essential for chondrocyte proliferation, differentiation and cell size expansion. This is Sulfate transporter (SLC26A2) from Bos taurus (Bovine).